A 270-amino-acid polypeptide reads, in one-letter code: Thiazole synthase (270 aa).

K111 acts as the Schiff-base intermediate with DXP in catalysis. Residues G172, 198–199 (AG), and 220–221 (NS) each bind 1-deoxy-D-xylulose 5-phosphate. A disordered region spans residues 249-270 (AGRLPTRAQASPSSPTTGKVND). Residues 256 to 270 (AQASPSSPTTGKVND) are compositionally biased toward polar residues.

The protein belongs to the ThiG family. Homotetramer. Forms heterodimers with either ThiH or ThiS.

It localises to the cytoplasm. It catalyses the reaction [ThiS sulfur-carrier protein]-C-terminal-Gly-aminoethanethioate + 2-iminoacetate + 1-deoxy-D-xylulose 5-phosphate = [ThiS sulfur-carrier protein]-C-terminal Gly-Gly + 2-[(2R,5Z)-2-carboxy-4-methylthiazol-5(2H)-ylidene]ethyl phosphate + 2 H2O + H(+). It participates in cofactor biosynthesis; thiamine diphosphate biosynthesis. Functionally, catalyzes the rearrangement of 1-deoxy-D-xylulose 5-phosphate (DXP) to produce the thiazole phosphate moiety of thiamine. Sulfur is provided by the thiocarboxylate moiety of the carrier protein ThiS. In vitro, sulfur can be provided by H(2)S. This is Thiazole synthase from Synechococcus sp. (strain WH7803).